A 277-amino-acid polypeptide reads, in one-letter code: MGLLECCARCLIGAPFASLVATGLCFFGVALFCGCGHEALTGTEQLIETYFSKNYQDYEFLIDVIHGFQYFIYGTAAFFFLYGALLLAEGFYTTGAVRQIFGDYRTTICGKGLSATVTGGPKGRGARGPQRAHSWQRVCHCLGKWLGHPDKFVGITYVLTIIWLLVFACSAVPVYIYFNTWTTCQSIGNPTKTSASIGTLCADARMYGILPWNAFPGKVCGSNLLSICKTSEFQMTFHLFIAAFVGAAATLVSLVTFIIATTYNFAVLRLMGRGTKF.

Over 2–10 (GLLECCARC) the chain is Cytoplasmic. 3 S-palmitoyl cysteine lipidation sites follow: Cys-6, Cys-7, and Cys-10. Residues 11–36 (LIGAPFASLVATGLCFFGVALFCGCG) form a helical membrane-spanning segment. Residues 37–59 (HEALTGTEQLIETYFSKNYQDYE) lie on the Extracellular side of the membrane. Residues 60-88 (FLIDVIHGFQYFIYGTAAFFFLYGALLLA) traverse the membrane as a helical segment. At 89-151 (EGFYTTGAVR…LGKWLGHPDK (63 aa)) the chain is on the cytoplasmic side. Residues Cys-109, Cys-139, and Cys-141 are each lipidated (S-palmitoyl cysteine). Residues 152–178 (FVGITYVLTIIWLLVFACSAVPVYIYF) form a helical membrane-spanning segment. The Extracellular portion of the chain corresponds to 179 to 238 (NTWTTCQSIGNPTKTSASIGTLCADARMYGILPWNAFPGKVCGSNLLSICKTSEFQMTFH). 2 cysteine pairs are disulfide-bonded: Cys-184–Cys-228 and Cys-201–Cys-220. Thr-199 carries the O-palmitoyl threonine lipid modification. A helical membrane pass occupies residues 239 to 268 (LFIAAFVGAAATLVSLVTFIIATTYNFAVL). Residues 269 to 277 (RLMGRGTKF) are Cytoplasmic-facing.

This sequence belongs to the myelin proteolipid protein family.

The protein localises to the cell membrane. Its function is as follows. This is the major myelin protein from the central nervous system. It plays an important role in the formation or maintenance of the multilamellar structure of myelin. The protein is Myelin proteolipid protein (PLP1) of Taeniopygia guttata (Zebra finch).